Reading from the N-terminus, the 99-residue chain is uncharacterized protein (99 aa).

An N-terminal signal peptide occupies residues 1 to 17 (MMMNAFFPAMALMVLVG). C18 carries the N-palmitoyl cysteine lipid modification. A lipid anchor (S-diacylglycerol cysteine) is attached at C18.

Its subcellular location is the cell membrane. This is an uncharacterized protein from Shigella flexneri.